A 262-amino-acid chain; its full sequence is MTKQFAVIGNPIEQSRSPELHHAFAEKTGVDLNYQKRLAPLDGFESSMRSFFAEGGSGMNVTVPFKEQAFALCNVLTERAQIAKAVNTLWMENGKLHGDNTDGQGLVAAIQALEWNLENTTILILGAGGATRGVIYPLVQAGAKKIVIANRTLARAEQLVDDLKTAVPQAQLQAISLNDLEGDFDIVINATSASLSGDALQLPEKLKFKYAYEMAYGKPSSFLDQAKQRNVPYAEGFGMLVGQAIEAFSIWNGVRPQLKDFL.

Residues 15 to 17 (SRS) and T62 each bind shikimate. K66 (proton acceptor) is an active-site residue. Residue E78 coordinates NADP(+). N87 and D102 together coordinate shikimate. NADP(+) contacts are provided by residues 126-130 (GAGGA), 150-155 (NRTLAR), and M214. Y216 provides a ligand contact to shikimate. G236 is a binding site for NADP(+).

Belongs to the shikimate dehydrogenase family. In terms of assembly, homodimer.

It catalyses the reaction shikimate + NADP(+) = 3-dehydroshikimate + NADPH + H(+). The protein operates within metabolic intermediate biosynthesis; chorismate biosynthesis; chorismate from D-erythrose 4-phosphate and phosphoenolpyruvate: step 4/7. Involved in the biosynthesis of the chorismate, which leads to the biosynthesis of aromatic amino acids. Catalyzes the reversible NADPH linked reduction of 3-dehydroshikimate (DHSA) to yield shikimate (SA). The protein is Shikimate dehydrogenase (NADP(+)) of Acinetobacter baumannii (strain SDF).